A 359-amino-acid chain; its full sequence is Peptide chain release factor 1 (359 aa).

Gln-235 is subject to N5-methylglutamine. Positions Gln-283 to Tyr-309 are disordered.

This sequence belongs to the prokaryotic/mitochondrial release factor family. Methylated by PrmC. Methylation increases the termination efficiency of RF1.

It is found in the cytoplasm. In terms of biological role, peptide chain release factor 1 directs the termination of translation in response to the peptide chain termination codons UAG and UAA. This chain is Peptide chain release factor 1, found in Brucella suis (strain ATCC 23445 / NCTC 10510).